A 592-amino-acid chain; its full sequence is E3 ubiquitin-protein ligase RNF180 (592 aa).

The Cytoplasmic portion of the chain corresponds to Met1–Asp564. Ser230 is subject to Phosphoserine. The RING-type zinc-finger motif lies at Cys432–Arg474. Residues Met565–Leu585 form a helical membrane-spanning segment. Over Cys586 to Phe592 the chain is Extracellular.

As to quaternary structure, interacts with ZIC2.

It is found in the endoplasmic reticulum membrane. The protein resides in the nucleus envelope. It catalyses the reaction S-ubiquitinyl-[E2 ubiquitin-conjugating enzyme]-L-cysteine + [acceptor protein]-L-lysine = [E2 ubiquitin-conjugating enzyme]-L-cysteine + N(6)-ubiquitinyl-[acceptor protein]-L-lysine.. It functions in the pathway protein modification; protein ubiquitination. Functionally, E3 ubiquitin-protein ligase which promotes polyubiquitination and degradation by the proteasome pathway of ZIC2. In Pongo abelii (Sumatran orangutan), this protein is E3 ubiquitin-protein ligase RNF180 (RNF180).